Reading from the N-terminus, the 200-residue chain is LexA repressor (200 aa).

Positions 29 to 48 form a DNA-binding region, H-T-H motif; that stretch reads IRDIARAFRITPRGAIVHLN. Catalysis depends on for autocatalytic cleavage activity residues Ser120 and Lys158.

It belongs to the peptidase S24 family. In terms of assembly, homodimer.

It carries out the reaction Hydrolysis of Ala-|-Gly bond in repressor LexA.. Functionally, represses a number of genes involved in the response to DNA damage (SOS response), including recA and lexA. In the presence of single-stranded DNA, RecA interacts with LexA causing an autocatalytic cleavage which disrupts the DNA-binding part of LexA, leading to derepression of the SOS regulon and eventually DNA repair. This Pseudothermotoga lettingae (strain ATCC BAA-301 / DSM 14385 / NBRC 107922 / TMO) (Thermotoga lettingae) protein is LexA repressor.